The sequence spans 596 residues: Interleukin-1 receptor-associated kinase 3 (596 aa).

One can recognise a Death domain in the interval 41-106 (WRGLAERLSS…RAIHLITNYG (66 aa)). Serine 110 is subject to Phosphoserine; by IRAK1. Residues 165-452 (FHKDFLIGEG…LESTQASLYF (288 aa)) form the Protein kinase domain. ATP contacts are provided by residues 171 to 179 (IGEGEIFEV), lysine 192, 295 to 298 (SSAN), and aspartate 311. Serine 467 carries the post-translational modification Phosphoserine. The disordered stretch occupies residues 560-596 (NIDPSSEAPGHSCRSRPVESSCSSKFSWDEYEQYKKE).

The protein belongs to the protein kinase superfamily. TKL Ser/Thr protein kinase family. Pelle subfamily. In terms of assembly, monomer. Homodimer; disulfide-linked. May interact with IRAK4 (when phosphorylated). Interacts (when phosphorylated at Ser-110) with PIN1 (via WW domain) in response to IL33-mediated (but not TLR4 ligand LPS) dendritic cell stimulation. In terms of tissue distribution, expressed in eosinophils, dendritic cells and/or monocytes (at protein level). Expressed predominantly in peripheral blood lymphocytes.

It localises to the cytoplasm. It is found in the nucleus. Functionally, putative inactive protein kinase which regulates signaling downstream of immune receptors including IL1R and Toll-like receptors. Inhibits dissociation of IRAK1 and IRAK4 from the Toll-like receptor signaling complex by either inhibiting the phosphorylation of IRAK1 and IRAK4 or stabilizing the receptor complex. Upon IL33-induced lung inflammation, positively regulates expression of IL6, CSF3, CXCL2 and CCL5 mRNAs in dendritic cells. The polypeptide is Interleukin-1 receptor-associated kinase 3 (Homo sapiens (Human)).